The chain runs to 190 residues: Lipid A acyltransferase PagP (190 aa).

Residues 1–29 (MYVAMIIRKYFLIIALLLMPWLAIPSVSA) form the signal peptide. Catalysis depends on residues histidine 62, aspartate 105, and serine 106.

This sequence belongs to the lipid A palmitoyltransferase family. In terms of assembly, homodimer.

It is found in the cell outer membrane. The enzyme catalyses a lipid A + a 1,2-diacyl-sn-glycero-3-phosphocholine = a hepta-acyl lipid A + a 2-acyl-sn-glycero-3-phosphocholine. The catalysed reaction is a lipid IVA + a 1,2-diacyl-sn-glycero-3-phosphocholine = a lipid IVB + a 2-acyl-sn-glycero-3-phosphocholine. It catalyses the reaction a lipid IIA + a 1,2-diacyl-sn-glycero-3-phosphocholine = a lipid IIB + a 2-acyl-sn-glycero-3-phosphocholine. In terms of biological role, transfers a fatty acid residue from the sn-1 position of a phospholipid to the N-linked hydroxyfatty acid chain on the proximal unit of lipid A or its precursors. Required for resistance to cationic antimicrobial peptides (CAMPs). Modifications of lipid A with an acyl chain allow to evade host immune defenses by resisting antimicrobial peptides and attenuating the inflammatory response to infection triggered by lipopolysaccharide through the Toll-like receptor 4 (TLR4) signal transduction pathway. The protein is Lipid A acyltransferase PagP of Salmonella typhimurium (strain LT2 / SGSC1412 / ATCC 700720).